We begin with the raw amino-acid sequence, 162 residues long: SsrA-binding protein (162 aa).

A disordered region spans residues 140-162 (DKRETAAKRDWSRQKSRLMKDHG).

It belongs to the SmpB family.

Its subcellular location is the cytoplasm. Required for rescue of stalled ribosomes mediated by trans-translation. Binds to transfer-messenger RNA (tmRNA), required for stable association of tmRNA with ribosomes. tmRNA and SmpB together mimic tRNA shape, replacing the anticodon stem-loop with SmpB. tmRNA is encoded by the ssrA gene; the 2 termini fold to resemble tRNA(Ala) and it encodes a 'tag peptide', a short internal open reading frame. During trans-translation Ala-aminoacylated tmRNA acts like a tRNA, entering the A-site of stalled ribosomes, displacing the stalled mRNA. The ribosome then switches to translate the ORF on the tmRNA; the nascent peptide is terminated with the 'tag peptide' encoded by the tmRNA and targeted for degradation. The ribosome is freed to recommence translation, which seems to be the essential function of trans-translation. The chain is SsrA-binding protein from Roseobacter denitrificans (strain ATCC 33942 / OCh 114) (Erythrobacter sp. (strain OCh 114)).